The chain runs to 285 residues: VIGGDECNINESPFLAFLYSQLLSSRRYFCGMTLINQEWVLTAAHCNLYPDRKDMNWWLLIKLGKHSGSTRRWVANYDEQVRYWPKEKFIWWYCPNKKKDVINNYVWVWWDKDILLWELWMLIRLNRPVKYSEHIAPLSLPSSPPSAKWWHVGSVCRIMGWGQITETWWNSEDTLPDVPRCANINLFNYEVCRAYNQRWWRGLPAKTLCAGDLEGIIRGGWDTCVGDSGGPLICDGQYQGIAYWGSKPCAEPDEPAAYSKVFDHLDWSQSVIAGGTWWRGDDTCP.

The Peptidase S1 domain occupies Val1–Ala273. 6 disulfide bridges follow: Cys7-Cys181, Cys30-Cys46, Cys94-Cys284, Cys156-Cys234, Cys192-Cys209, and Cys224-Cys249. Residues His45 and Asp113 each act as charge relay system in the active site. Ser228 acts as the Charge relay system in catalysis.

This sequence belongs to the peptidase S1 family. Snake venom subfamily. In terms of assembly, monomer. Post-translationally, homologous thrombin-like enzymes are N-glycosylated. This enzyme does not contain the consensus glycosylation sites, suggesting it is not glycosylated. As to expression, expressed by the venom gland.

The protein resides in the secreted. Inhibited by PMSF, disodium-EDTA, S(Dm) and soybean trypsin inhibitor (SBTI). SBTI and S(Dm) (the anti-hemorrhagic protein) acts as a non-competitive inhibitors that decrease the enzymatic activity. Its function is as follows. Thrombin-like enzyme that induces the formation of fibrin clot. Cleaves the Aalpha-chain of fibrinogen (FGA) with higher activity than the Bbeta-chain (FGB). Induces platelet aggregation in both platelet-rich plasma and in washed platelet preparations. This aggregation is strongly inhibited by preincubation of the enzyme with PMSF. This Bothrops marajoensis (Marajo lancehead) protein is Thrombin-like enzyme TLBm.